The following is a 468-amino-acid chain: Uronate isomerase (468 aa).

This sequence belongs to the metallo-dependent hydrolases superfamily. Uronate isomerase family.

The catalysed reaction is D-glucuronate = D-fructuronate. The enzyme catalyses aldehydo-D-galacturonate = keto-D-tagaturonate. Its pathway is carbohydrate metabolism; pentose and glucuronate interconversion. The sequence is that of Uronate isomerase from Endomicrobium trichonymphae.